The chain runs to 920 residues: Neurofibromin-A (920 aa).

In terms of domain architecture, Ras-GAP spans 63–291 (NKTLPLIKDL…EKMSAYFNLI (229 aa)). Disordered regions lie at residues 344-405 (KWLA…TTTA) and 477-508 (LGPS…GASM). The span at 346–369 (LATTPSGNTPSPAISNASSAHNGK) shows a compositional bias: polar residues. The span at 370-405 (SNNTTNNNNNNNNNNNNNNNNNNNNNNNSNKTTTTA) shows a compositional bias: low complexity. Over residues 498-507 (PTTSLQNGAS) the composition is skewed to polar residues. Residues 512 to 673 (FDECTHMLER…TSKDFITKSY (162 aa)) enclose the CRAL-TRIO domain.

Functionally, regulator of the GTPase activity of Ras, mainly RasG and RasB. This chain is Neurofibromin-A (nfaA), found in Dictyostelium discoideum (Social amoeba).